The following is a 77-amino-acid chain: Large ribosomal subunit protein uL29 (77 aa).

It belongs to the universal ribosomal protein uL29 family.

In Mycolicibacterium smegmatis (strain ATCC 700084 / mc(2)155) (Mycobacterium smegmatis), this protein is Large ribosomal subunit protein uL29.